The primary structure comprises 699 residues: eEF1A lysine and N-terminal methyltransferase (699 aa).

Met1 is modified (N-acetylmethionine). A Phosphoserine modification is found at Ser267. The segment at 433–459 (VSHKAQKKRKKDRKKQRPADAEDLPAA) is disordered. A compositionally biased stretch (basic residues) spans 436–448 (KAQKKRKKDRKKQ).

Belongs to the methyltransferase superfamily. As to quaternary structure, forms a tripartite complex containing GAB1, METTL13 and SPRY2. Within the complex interacts with GAB1 and SPRY2.

Its subcellular location is the cytoplasm. It localises to the nucleus. It is found in the mitochondrion. The enzyme catalyses L-lysyl-[protein] + S-adenosyl-L-methionine = N(6)-methyl-L-lysyl-[protein] + S-adenosyl-L-homocysteine + H(+). The catalysed reaction is N(6)-methyl-L-lysyl-[protein] + S-adenosyl-L-methionine = N(6),N(6)-dimethyl-L-lysyl-[protein] + S-adenosyl-L-homocysteine + H(+). It carries out the reaction N-terminal glycyl-L-lysyl-L-glutamyl-[protein] + 3 S-adenosyl-L-methionine = N-terminal N,N,N-trimethyl-glycyl-L-lysyl-L-glutamyl-[protein] + 3 S-adenosyl-L-homocysteine + 3 H(+). Protein N-terminal methyltransferase activity is inhibited by GTP and GDP. Its function is as follows. Dual methyltransferase that catalyzes methylation of elongation factor 1-alpha (EEF1A1 and EEF1A2) at two different positions, and is therefore involved in the regulation of mRNA translation. Via its C-terminus, methylates EEF1A1 and EEF1A2 at the N-terminal residue 'Gly-2'. Via its N-terminus dimethylates EEF1A1 and EEF1A2 at residue 'Lys-55'. Has no activity towards core histones H2A, H2B, H3 and H4. The chain is eEF1A lysine and N-terminal methyltransferase from Homo sapiens (Human).